Consider the following 126-residue polypeptide: Phosphoribosyl-AMP cyclohydrolase (126 aa).

A Mg(2+)-binding site is contributed by Asp76. Cys77 serves as a coordination point for Zn(2+). 2 residues coordinate Mg(2+): Asp78 and Asp80. 2 residues coordinate Zn(2+): Cys94 and Cys101.

This sequence belongs to the PRA-CH family. In terms of assembly, homodimer. Mg(2+) serves as cofactor. Zn(2+) is required as a cofactor.

The protein resides in the cytoplasm. The enzyme catalyses 1-(5-phospho-beta-D-ribosyl)-5'-AMP + H2O = 1-(5-phospho-beta-D-ribosyl)-5-[(5-phospho-beta-D-ribosylamino)methylideneamino]imidazole-4-carboxamide. Its pathway is amino-acid biosynthesis; L-histidine biosynthesis; L-histidine from 5-phospho-alpha-D-ribose 1-diphosphate: step 3/9. Catalyzes the hydrolysis of the adenine ring of phosphoribosyl-AMP. The protein is Phosphoribosyl-AMP cyclohydrolase of Nitratidesulfovibrio vulgaris (strain ATCC 29579 / DSM 644 / CCUG 34227 / NCIMB 8303 / VKM B-1760 / Hildenborough) (Desulfovibrio vulgaris).